A 674-amino-acid polypeptide reads, in one-letter code: tRNA 5-methylaminomethyl-2-thiouridine biosynthesis bifunctional protein MnmC (674 aa).

Residues 1 to 246 (MFIMSSISHA…KREMIAGSLS (246 aa)) are tRNA (mnm(5)s(2)U34)-methyltransferase. The FAD-dependent cmnm(5)s(2)U34 oxidoreductase stretch occupies residues 272–674 (IGGGIASATL…RKGKALTQKV (403 aa)).

It in the N-terminal section; belongs to the methyltransferase superfamily. tRNA (mnm(5)s(2)U34)-methyltransferase family. The protein in the C-terminal section; belongs to the DAO family. It depends on FAD as a cofactor.

The protein localises to the cytoplasm. It carries out the reaction 5-aminomethyl-2-thiouridine(34) in tRNA + S-adenosyl-L-methionine = 5-methylaminomethyl-2-thiouridine(34) in tRNA + S-adenosyl-L-homocysteine + H(+). Catalyzes the last two steps in the biosynthesis of 5-methylaminomethyl-2-thiouridine (mnm(5)s(2)U) at the wobble position (U34) in tRNA. Catalyzes the FAD-dependent demodification of cmnm(5)s(2)U34 to nm(5)s(2)U34, followed by the transfer of a methyl group from S-adenosyl-L-methionine to nm(5)s(2)U34, to form mnm(5)s(2)U34. The protein is tRNA 5-methylaminomethyl-2-thiouridine biosynthesis bifunctional protein MnmC of Vibrio cholerae serotype O1 (strain ATCC 39315 / El Tor Inaba N16961).